The chain runs to 433 residues: MLDPRHVAEHLDEVRAALALRSPAAAASLGDDFASTVSARRSNIQELERWQAERNAANEAMARLDKKSPEFAQKRDELKALSTRIKEAEQVVSELEKRMTELLSVVPNLPDPSVPVGAGEEGNVVVRAWGEKPSFSFAPKSHWDIGTALGLLDFERAAKLSGARFTVLMGAAARLERALISFMLDLHTREQGYLEVLPPFLVKDTALFGTGNLPKFAEDLFKTQKSDPERAYDLYLIPTAEVPVTNLHADEILDGASLPIAYAAYTPCFRSEAGSHGRDVRGLIRQHQFDKVELVRFSAPEDSARQHELLTSHAEEVLKRLGLHYRVSALCTGDLGFGSQKTYDLEVWLPGQGVYREISSCSNFGDFQARRAQIRYRPEPKAKPRLVHTMNGSALAVGRTVIAILEQYQQADGTVVVPEPLRAFMGCEVLRGR.

239 to 241 (TAE) contributes to the L-serine binding site. ATP is bound at residue 270–272 (RSE). Position 293 (glutamate 293) interacts with L-serine. An ATP-binding site is contributed by 357–360 (EISS). L-serine is bound at residue serine 393.

The protein belongs to the class-II aminoacyl-tRNA synthetase family. Type-1 seryl-tRNA synthetase subfamily. In terms of assembly, homodimer. The tRNA molecule binds across the dimer.

The protein localises to the cytoplasm. It catalyses the reaction tRNA(Ser) + L-serine + ATP = L-seryl-tRNA(Ser) + AMP + diphosphate + H(+). The enzyme catalyses tRNA(Sec) + L-serine + ATP = L-seryl-tRNA(Sec) + AMP + diphosphate + H(+). The protein operates within aminoacyl-tRNA biosynthesis; selenocysteinyl-tRNA(Sec) biosynthesis; L-seryl-tRNA(Sec) from L-serine and tRNA(Sec): step 1/1. Catalyzes the attachment of serine to tRNA(Ser). Is also able to aminoacylate tRNA(Sec) with serine, to form the misacylated tRNA L-seryl-tRNA(Sec), which will be further converted into selenocysteinyl-tRNA(Sec). The protein is Serine--tRNA ligase of Sorangium cellulosum (strain So ce56) (Polyangium cellulosum (strain So ce56)).